Reading from the N-terminus, the 509-residue chain is Probable aspartic-type endopeptidase CTSD (509 aa).

The first 21 residues, 1 to 21 (MQFLWLCLLSAVTLQFTGTLA), serve as a signal peptide directing secretion. The 307-residue stretch at 102 to 408 (YFSEVKVGSE…DFDKNRVGLA (307 aa)) folds into the Peptidase A1 domain. D120 is a catalytic residue. Residue N174 is glycosylated (N-linked (GlcNAc...) asparagine). Residue D302 is part of the active site. N361 carries an N-linked (GlcNAc...) asparagine glycan. Residues 451–489 (NKAPSGGSPGLPAESGSDSTTNGEATNGATSSPNSSSSV) are disordered. The span at 466-480 (GSDSTTNGEATNGAT) shows a compositional bias: polar residues. N-linked (GlcNAc...) asparagine glycosylation is present at N484. The GPI-anchor amidated serine moiety is linked to residue S485. Positions 486-509 (SSSVLTPTWLTLAVFFAIGSSLWS) are cleaved as a propeptide — removed in mature form.

The protein belongs to the peptidase A1 family.

It localises to the cell membrane. In terms of biological role, probable GPI-anchored aspartic-type endopeptidase which contributes to virulence. The chain is Probable aspartic-type endopeptidase CTSD (CTSD) from Arthroderma benhamiae (strain ATCC MYA-4681 / CBS 112371) (Trichophyton mentagrophytes).